We begin with the raw amino-acid sequence, 678 residues long: Secretin ExeD (678 aa).

The N-terminal stretch at 1–25 (MINKGKSWRLATVAAALMMAGSAWA) is a signal peptide. An N0 region spans residues 26–122 (TEYSASFKNA…VVDETNPGIG (97 aa)). An N1 region spans residues 124–188 (EMVTRVVPVR…EVVRRVDKAG (65 aa)). The N2 stretch occupies residues 189–264 (DQEVDIIKLR…MVRQLDRDLQ (76 aa)). The segment at 267–347 (GNTRVFYLKY…ELEQVVAKLD (81 aa)) is N3. Residues 352 to 602 (QVLVEAIIVE…VFIRPTILRD (251 aa)) form a secretin region. Residues 604–678 (HVYSGISSNK…GAQPFVQGNK (75 aa)) are s domain.

Belongs to the bacterial secretin family. GSP D subfamily. In terms of assembly, forms a cylindrical channel with 15 subunits.

The protein localises to the cell outer membrane. Involved in a type II secretion system (T2SS, formerly general secretion pathway, GSP) for the export of proteins. This subunit forms the outer membrane channel. The protein is Secretin ExeD (exeD) of Aeromonas salmonicida.